The primary structure comprises 157 residues: Transcriptional repressor NrdR (157 aa).

The interval 1 to 22 is disordered; that stretch reads MRCPKCGATKSSVIDSRQAEEG. A zinc finger spans residues 3-34; sequence CPKCGATKSSVIDSRQAEEGNTIRRRRECDEC. In terms of domain architecture, ATP-cone spans 49 to 139; sequence LVVVKKDGTR…VYRSFKDVSE (91 aa).

Belongs to the NrdR family. Zn(2+) is required as a cofactor.

In terms of biological role, negatively regulates transcription of bacterial ribonucleotide reductase nrd genes and operons by binding to NrdR-boxes. The protein is Transcriptional repressor NrdR of Streptococcus pneumoniae (strain Hungary19A-6).